A 541-amino-acid chain; its full sequence is Chaperonin GroEL (541 aa).

ATP-binding positions include 29–32 (TLGP), 86–90 (DGTTT), Gly-413, 478–480 (NAA), and Asp-494.

Belongs to the chaperonin (HSP60) family. Forms a cylinder of 14 subunits composed of two heptameric rings stacked back-to-back. Interacts with the co-chaperonin GroES.

The protein localises to the cytoplasm. It catalyses the reaction ATP + H2O + a folded polypeptide = ADP + phosphate + an unfolded polypeptide.. Together with its co-chaperonin GroES, plays an essential role in assisting protein folding. The GroEL-GroES system forms a nano-cage that allows encapsulation of the non-native substrate proteins and provides a physical environment optimized to promote and accelerate protein folding. The polypeptide is Chaperonin GroEL (Agathobacter rectalis (strain ATCC 33656 / DSM 3377 / JCM 17463 / KCTC 5835 / VPI 0990) (Eubacterium rectale)).